We begin with the raw amino-acid sequence, 478 residues long: Glycogen synthase (478 aa).

Residue lysine 15 participates in ADP-alpha-D-glucose binding.

The protein belongs to the glycosyltransferase 1 family. Bacterial/plant glycogen synthase subfamily.

The catalysed reaction is [(1-&gt;4)-alpha-D-glucosyl](n) + ADP-alpha-D-glucose = [(1-&gt;4)-alpha-D-glucosyl](n+1) + ADP + H(+). Its pathway is glycan biosynthesis; glycogen biosynthesis. Its function is as follows. Synthesizes alpha-1,4-glucan chains using ADP-glucose. The polypeptide is Glycogen synthase (Streptococcus uberis (strain ATCC BAA-854 / 0140J)).